The sequence spans 315 residues: MAGQHLPVPRLEGVSREQFMQHLYPQRKPLVLEGIDLGPCTSKWTVDYLSQVGGKKEVKIHVAAVAQMDFISKNFVYRTLPFDQLVQRAAEEKHKEFFVSEDEKYYLRSLGEDPRKDVADIRKQFPLLKGDIKFPEFFKEEQFFSSVFRISSPGLQLWTHYDVMDNLLIQVTGKKRVVLFSPRDAQYLYLKGTKSEVLNIDNPDLAKYPLFSKARRYECSLEAGDVLFIPALWFHNVISEEFGVGVNIFWKHLPSECYDKTDTYGNKDPTAASRAAQILDRALKTLAELPEEYRDFYARRMVLHIQDKAYSKNSE.

Residues 102–267 (DEKYYLRSLG…YDKTDTYGNK (166 aa)) form the JmjC domain. Y106 provides a ligand contact to 2-oxoglutarate. Residues H160 and D162 each contribute to the Fe cation site. 2-oxoglutarate contacts are provided by N166 and K175. H235 contacts Fe cation.

It belongs to the TYW5 family. Homodimer. The cofactor is Fe(2+).

It catalyses the reaction 7-[(3S)-3-amino-3-carboxypropyl]wyosine(37) in tRNA(Phe) + 2-oxoglutarate + O2 = 7-(2-hydroxy-3-amino-3-carboxypropyl)wyosine(37) in tRNA(Phe) + succinate + CO2. It participates in tRNA modification; wybutosine-tRNA(Phe) biosynthesis. Its function is as follows. tRNA hydroxylase that acts as a component of the wybutosine biosynthesis pathway. Wybutosine is a hyper modified guanosine with a tricyclic base found at the 3'-position adjacent to the anticodon of eukaryotic phenylalanine tRNA. Catalyzes the hydroxylation of 7-(a-amino-a-carboxypropyl)wyosine (yW-72) into undermodified hydroxywybutosine (OHyW*). OHyW* being further transformed into hydroxywybutosine (OHyW) by LCMT2/TYW4. OHyW is a derivative of wybutosine found in higher eukaryotes. This chain is tRNA wybutosine-synthesizing protein 5 (TYW5), found in Homo sapiens (Human).